The primary structure comprises 191 residues: Polysulfide reductase chain B (191 aa).

4Fe-4S ferredoxin-type domains are found at residues 5-34 (YGMI…PDSV), 50-83 (GTLS…VNED), and 84-113 (GIVS…VDPV). The [4Fe-4S] cluster site is built by Cys-14, Cys-17, Cys-20, Cys-24, Cys-61, Cys-64, Cys-69, Cys-73, Cys-93, Cys-96, Cys-99, Cys-103, Cys-120, Cys-123, Cys-136, and Cys-140.

In terms of assembly, functional polysulfide reductase is made up of three different (A, B, and C) subunits.

Component of the phosphorylative electron transport system with polysulfide as the terminal acceptor. In Wolinella succinogenes (strain ATCC 29543 / DSM 1740 / CCUG 13145 / JCM 31913 / LMG 7466 / NCTC 11488 / FDC 602W) (Vibrio succinogenes), this protein is Polysulfide reductase chain B (psrB).